The chain runs to 480 residues: Cytochrome b-c1 complex subunit 1, mitochondrial (480 aa).

The N-terminal 34 residues, 1 to 34 (MAASAVCRAACSGTQVLLRTRRSPALLRLPALRG), are a transit peptide targeting the mitochondrion. 2 positions are modified to N6-acetyllysine: Lys-111 and Lys-138. An N6-acetyllysine; alternate modification is found at Lys-163. Lys-163 is modified (N6-succinyllysine; alternate). Residue Ser-212 is modified to Phosphoserine. Residue Thr-214 is modified to Phosphothreonine. An N6-acetyllysine modification is found at Lys-248.

Belongs to the peptidase M16 family. UQCRC1/QCR1 subfamily. As to quaternary structure, component of the ubiquinol-cytochrome c oxidoreductase (cytochrome b-c1 complex, complex III, CIII), a multisubunit enzyme composed of 11 subunits. The complex is composed of 3 respiratory subunits cytochrome b, cytochrome c1 and Rieske protein UQCRFS1, 2 core protein subunits UQCRC1/QCR1 and UQCRC2/QCR2, and 6 low-molecular weight protein subunits UQCRH/QCR6, UQCRB/QCR7, UQCRQ/QCR8, UQCR10/QCR9, UQCR11/QCR10 and subunit 9, the cleavage product of Rieske protein UQCRFS1. The complex exists as an obligatory dimer and forms supercomplexes (SCs) in the inner mitochondrial membrane with NADH-ubiquinone oxidoreductase (complex I, CI) and cytochrome c oxidase (complex IV, CIV), resulting in different assemblies (supercomplex SCI(1)III(2)IV(1) and megacomplex MCI(2)III(2)IV(2)). Interacts with UQCC6. Interacts with STMP1. In terms of processing, acetylation of Lys-138 is observed in liver mitochondria from fasted mice but not from fed mice. As to expression, expressed in neurons and astrocytes of the cerebral cortex and hippocampus (at protein level).

Its subcellular location is the mitochondrion inner membrane. Functionally, component of the ubiquinol-cytochrome c oxidoreductase, a multisubunit transmembrane complex that is part of the mitochondrial electron transport chain which drives oxidative phosphorylation. The respiratory chain contains 3 multisubunit complexes succinate dehydrogenase (complex II, CII), ubiquinol-cytochrome c oxidoreductase (cytochrome b-c1 complex, complex III, CIII) and cytochrome c oxidase (complex IV, CIV), that cooperate to transfer electrons derived from NADH and succinate to molecular oxygen, creating an electrochemical gradient over the inner membrane that drives transmembrane transport and the ATP synthase. The cytochrome b-c1 complex catalyzes electron transfer from ubiquinol to cytochrome c, linking this redox reaction to translocation of protons across the mitochondrial inner membrane, with protons being carried across the membrane as hydrogens on the quinol. In the process called Q cycle, 2 protons are consumed from the matrix, 4 protons are released into the intermembrane space and 2 electrons are passed to cytochrome c. The 2 core subunits UQCRC1/QCR1 and UQCRC2/QCR2 are homologous to the 2 mitochondrial-processing peptidase (MPP) subunits beta-MPP and alpha-MPP respectively, and they seem to have preserved their MPP processing properties. May be involved in the in situ processing of UQCRFS1 into the mature Rieske protein and its mitochondrial targeting sequence (MTS)/subunit 9 when incorporated into complex III. Seems to play an important role in the maintenance of proper mitochondrial function in nigral dopaminergic neurons. The polypeptide is Cytochrome b-c1 complex subunit 1, mitochondrial (Uqcrc1) (Mus musculus (Mouse)).